The sequence spans 718 residues: uncharacterized protein (718 aa).

6 helical membrane passes run 9-29 (VISTIPVFIAVNIAAVGIWFF), 60-80 (NVFFTLIAFSISSFIVQLHIG), 83-103 (IQYIVLMTVLTFIFTMIGAVG), 136-156 (VMILCGTLLYSVVTLIVYLFF), 391-411 (IVVFLCCAIVEFFQFNLGYWI), and 506-526 (LLDTLLGAAISWFAVSYLWPD).

It belongs to the YccS/YhfK family.

It is found in the cell membrane. This is an uncharacterized protein from Haemophilus influenzae (strain ATCC 51907 / DSM 11121 / KW20 / Rd).